A 197-amino-acid polypeptide reads, in one-letter code: UPF0462 protein C4orf33 homolog (197 aa).

It belongs to the UPF0462 family.

In Danio rerio (Zebrafish), this protein is UPF0462 protein C4orf33 homolog.